A 331-amino-acid polypeptide reads, in one-letter code: Sulfate/thiosulfate import ATP-binding protein CysA (331 aa).

Residues 2-232 form the ABC transporter domain; that stretch reads ITVTNARKNY…PANEFVMSFL (231 aa). An ATP-binding site is contributed by 34–41; sequence GPSGSGKS.

Belongs to the ABC transporter superfamily. Sulfate/tungstate importer (TC 3.A.1.6) family. In terms of assembly, the complex is composed of two ATP-binding proteins (CysA), two transmembrane proteins (CysT and CysW) and a solute-binding protein (CysP).

It is found in the cell membrane. The catalysed reaction is sulfate(out) + ATP + H2O = sulfate(in) + ADP + phosphate + H(+). It carries out the reaction thiosulfate(out) + ATP + H2O = thiosulfate(in) + ADP + phosphate + H(+). Part of the ABC transporter complex CysAWTP involved in sulfate/thiosulfate import. Responsible for energy coupling to the transport system. In Nocardia farcinica (strain IFM 10152), this protein is Sulfate/thiosulfate import ATP-binding protein CysA.